A 71-amino-acid chain; its full sequence is Small ribosomal subunit protein eS17 (71 aa).

The protein belongs to the eukaryotic ribosomal protein eS17 family.

The protein is Small ribosomal subunit protein eS17 of Pyrobaculum neutrophilum (strain DSM 2338 / JCM 9278 / NBRC 100436 / V24Sta) (Thermoproteus neutrophilus).